The chain runs to 71 residues: Large ribosomal subunit protein bL31 (71 aa).

The protein belongs to the bacterial ribosomal protein bL31 family. Type A subfamily. As to quaternary structure, part of the 50S ribosomal subunit.

In terms of biological role, binds the 23S rRNA. The chain is Large ribosomal subunit protein bL31 (rpmE) from Mycoplasmopsis synoviae (strain 53) (Mycoplasma synoviae).